A 419-amino-acid chain; its full sequence is Acyl transferase 9 (419 aa).

Active-site proton acceptor residues include His161 and Asp362.

Belongs to the plant acyltransferase family.

Involved in the incorporation of ferulate into the cell wall. May act as arabinoxylan feruloyl transferase. The protein is Acyl transferase 9 of Oryza sativa subsp. japonica (Rice).